The chain runs to 136 residues: Holo-[acyl-carrier-protein] synthase (136 aa).

The Mg(2+) site is built by Asp-8 and Glu-58.

It belongs to the P-Pant transferase superfamily. AcpS family. Mg(2+) is required as a cofactor.

It localises to the cytoplasm. The catalysed reaction is apo-[ACP] + CoA = holo-[ACP] + adenosine 3',5'-bisphosphate + H(+). In terms of biological role, transfers the 4'-phosphopantetheine moiety from coenzyme A to a Ser of acyl-carrier-protein. This Leuconostoc mesenteroides subsp. mesenteroides (strain ATCC 8293 / DSM 20343 / BCRC 11652 / CCM 1803 / JCM 6124 / NCDO 523 / NBRC 100496 / NCIMB 8023 / NCTC 12954 / NRRL B-1118 / 37Y) protein is Holo-[acyl-carrier-protein] synthase.